Here is a 159-residue protein sequence, read N- to C-terminus: Putative 2'-deoxynucleoside 5'-phosphate N-hydrolase 1 (159 aa).

Substrate contacts are provided by residues 25–31 (FLSGSIR), Tyr40, His58, Glu104, and 126–128 (SAM).

It belongs to the 2'-deoxynucleoside 5'-phosphate N-hydrolase 1 family. In terms of assembly, monomer and homodimer.

The enzyme catalyses a pyrimidine 2'-deoxyribonucleoside 5'-phosphate + H2O = a pyrimidine nucleobase + 2-deoxy-D-ribose 5-phosphate. It carries out the reaction a purine 2'-deoxyribonucleoside 5'-phosphate + H2O = a purine nucleobase + 2-deoxy-D-ribose 5-phosphate. In terms of biological role, catalyzes the cleavage of the N-glycosidic bond of deoxyribonucleoside 5'-monophosphates to yield deoxyribose 5-phosphate and a purine or pyrimidine base. This Methanosarcina barkeri (strain Fusaro / DSM 804) protein is Putative 2'-deoxynucleoside 5'-phosphate N-hydrolase 1.